The following is a 384-amino-acid chain: Succinate--CoA ligase [ADP-forming] subunit beta (384 aa).

The ATP-grasp domain occupies 9–242; that stretch reads KAILAQYKVP…LNEEDPLEVE (234 aa). Residues K45, 52–54, E98, L101, and E106 each bind ATP; that span reads GRG. Mg(2+) contacts are provided by N197 and D211. Residues N262 and 319-321 contribute to the substrate site; that span reads GIL.

It belongs to the succinate/malate CoA ligase beta subunit family. In terms of assembly, heterotetramer of two alpha and two beta subunits. Mg(2+) is required as a cofactor.

It carries out the reaction succinate + ATP + CoA = succinyl-CoA + ADP + phosphate. The catalysed reaction is GTP + succinate + CoA = succinyl-CoA + GDP + phosphate. It participates in carbohydrate metabolism; tricarboxylic acid cycle; succinate from succinyl-CoA (ligase route): step 1/1. Succinyl-CoA synthetase functions in the citric acid cycle (TCA), coupling the hydrolysis of succinyl-CoA to the synthesis of either ATP or GTP and thus represents the only step of substrate-level phosphorylation in the TCA. The beta subunit provides nucleotide specificity of the enzyme and binds the substrate succinate, while the binding sites for coenzyme A and phosphate are found in the alpha subunit. The protein is Succinate--CoA ligase [ADP-forming] subunit beta of Solibacter usitatus (strain Ellin6076).